We begin with the raw amino-acid sequence, 279 residues long: Aldo-keto reductase Mvan_2161 (279 aa).

The Proton donor role is filled by Tyr54. NADPH is bound by residues Leu194, Val196, Ile232, Arg234, Ser235, Arg240, Ser243, Asn244, and Arg270.

Belongs to the aldo/keto reductase family.

This Mycolicibacterium vanbaalenii (strain DSM 7251 / JCM 13017 / BCRC 16820 / KCTC 9966 / NRRL B-24157 / PYR-1) (Mycobacterium vanbaalenii) protein is Aldo-keto reductase Mvan_2161.